A 1187-amino-acid chain; its full sequence is DNA-directed RNA polymerase subunit beta (1187 aa).

The interval 1150-1187 is disordered; it reads KDEDDDPASSADDLGFNIGARPDAAAKEDQKAEEPEYQ. Residues 1173-1187 show a composition bias toward basic and acidic residues; sequence AAAKEDQKAEEPEYQ.

The protein belongs to the RNA polymerase beta chain family. In terms of assembly, the RNAP catalytic core consists of 2 alpha, 1 beta, 1 beta' and 1 omega subunit. When a sigma factor is associated with the core the holoenzyme is formed, which can initiate transcription.

It carries out the reaction RNA(n) + a ribonucleoside 5'-triphosphate = RNA(n+1) + diphosphate. Functionally, DNA-dependent RNA polymerase catalyzes the transcription of DNA into RNA using the four ribonucleoside triphosphates as substrates. The sequence is that of DNA-directed RNA polymerase subunit beta from Bifidobacterium longum (strain DJO10A).